Reading from the N-terminus, the 232-residue chain is MSKLTKKQKLAFSKIEPGKAYTISEASALVKEITTTNFDASVDIDVRLGVDPRKANQMVRGVVTLPHGTGKQIRVLALCSPDKEAEAKEAGADYVGLDEYIEKIKAGWTDIDVIITMPAIMGKIGALGRVLGPRGLMPNPKSGTVTNDVGAAVKEVKAGKIDFKVDKTGIVHTSIGKVSFSADQIRDNAREFINTIIKLKPTTAKGTYIKSIYLSSTMSFGIKVDPKTVDEN.

It belongs to the universal ribosomal protein uL1 family. In terms of assembly, part of the 50S ribosomal subunit.

Binds directly to 23S rRNA. The L1 stalk is quite mobile in the ribosome, and is involved in E site tRNA release. Functionally, protein L1 is also a translational repressor protein, it controls the translation of the L11 operon by binding to its mRNA. The protein is Large ribosomal subunit protein uL1 of Porphyromonas gingivalis (strain ATCC 33277 / DSM 20709 / CIP 103683 / JCM 12257 / NCTC 11834 / 2561).